A 208-amino-acid chain; its full sequence is Small ribosomal subunit protein eS8 (208 aa).

The protein belongs to the eukaryotic ribosomal protein eS8 family. Component of the small ribosomal subunit. Identified in a IGF2BP1-dependent mRNP granule complex containing untranslated mRNAs. Part of the small subunit (SSU) processome, composed of more than 70 proteins and the RNA chaperone small nucleolar RNA (snoRNA) U3.

Its subcellular location is the cytoplasm. The protein localises to the membrane. It localises to the nucleus. It is found in the nucleolus. Component of the small ribosomal subunit. The ribosome is a large ribonucleoprotein complex responsible for the synthesis of proteins in the cell. Part of the small subunit (SSU) processome, first precursor of the small eukaryotic ribosomal subunit. During the assembly of the SSU processome in the nucleolus, many ribosome biogenesis factors, an RNA chaperone and ribosomal proteins associate with the nascent pre-rRNA and work in concert to generate RNA folding, modifications, rearrangements and cleavage as well as targeted degradation of pre-ribosomal RNA by the RNA exosome. The sequence is that of Small ribosomal subunit protein eS8 (rps-8) from Caenorhabditis elegans.